A 557-amino-acid polypeptide reads, in one-letter code: Polypyrimidine tract-binding protein 1 (557 aa).

Met1 is subject to N-acetylmethionine. Phosphoserine is present on Ser16. 3 consecutive RRM domains span residues 59-143, 184-260, and 363-437; these read RVIH…SSPN, LRII…FSKL, and SVLL…LSKH. Lys65 is covalently cross-linked (Glycyl lysine isopeptide (Lys-Gly) (interchain with G-Cter in SUMO2)). Tyr127 is modified (phosphotyrosine). Thr138 carries the phosphothreonine modification. Ser141 carries the phosphoserine modification. Lys218 participates in a covalent cross-link: Glycyl lysine isopeptide (Lys-Gly) (interchain with G-Cter in SUMO2). Ser459 carries the post-translational modification Phosphoserine. Residues 480–555 enclose the RRM 4 domain; sequence ATLHLSNIPP…HHLRVSFSKS (76 aa).

As to quaternary structure, monomer. Part of a ternary complex containing KHSRP, PTBP1, PTBP2 and HNRPH1. Interacts with RAVER1 and SFPQ.

The protein localises to the nucleus. Functionally, plays a role in pre-mRNA splicing and in the regulation of alternative splicing events. Activates exon skipping of its own pre-mRNA during muscle cell differentiation. Binds to the polypyrimidine tract of introns. May promote RNA looping when bound to two separate polypyrimidine tracts in the same pre-mRNA. May promote the binding of U2 snRNP to pre-mRNA. Cooperates with RAVER1 to modulate switching between mutually exclusive exons during maturation of the TPM1 pre-mRNA. Represses the splicing of MAPT/Tau exon 10. Binds to polypyrimidine-rich controlling element (PCE) of CFTR and promotes exon skipping of CFTR exon 9, thereby antagonizing TIA1 and its role in exon inclusion of CFTR exon 9. Plays a role in the splicing of pyruvate kinase PKM by binding repressively to a polypyrimidine tract flanking PKM exon 9, inhibiting exon 9 inclusion and resulting in exon 10 inclusion and production of the PKM M2 isoform. The protein is Polypyrimidine tract-binding protein 1 (PTBP1) of Sus scrofa (Pig).